The primary structure comprises 131 residues: Profilin-5 (131 aa).

A disulfide bond links C13 and C115. The Involved in PIP2 interaction motif lies at 81–97; it reads AVIRGKKGAGGITIKKT. T111 carries the phosphothreonine modification.

The protein belongs to the profilin family. In terms of assembly, occurs in many kinds of cells as a complex with monomeric actin in a 1:1 ratio. Post-translationally, phosphorylated by MAP kinases.

The protein localises to the cytoplasm. Its subcellular location is the cytoskeleton. Functionally, binds to actin and affects the structure of the cytoskeleton. At high concentrations, profilin prevents the polymerization of actin, whereas it enhances it at low concentrations. The protein is Profilin-5 of Olea europaea (Common olive).